A 283-amino-acid polypeptide reads, in one-letter code: Protein/nucleic acid deglycase HchA (283 aa).

Positions 86, 91, and 123 each coordinate Zn(2+). Residue cysteine 185 is the Nucleophile of the active site.

Belongs to the peptidase C56 family. HchA subfamily. In terms of assembly, homodimer.

The protein localises to the cytoplasm. The enzyme catalyses N(omega)-(1-hydroxy-2-oxopropyl)-L-arginyl-[protein] + H2O = lactate + L-arginyl-[protein] + H(+). It carries out the reaction N(6)-(1-hydroxy-2-oxopropyl)-L-lysyl-[protein] + H2O = lactate + L-lysyl-[protein] + H(+). The catalysed reaction is S-(1-hydroxy-2-oxopropyl)-L-cysteinyl-[protein] + H2O = lactate + L-cysteinyl-[protein] + H(+). It catalyses the reaction N(omega)-(1-hydroxy-2-oxoethyl)-L-arginyl-[protein] + H2O = L-arginyl-[protein] + glycolate + H(+). The enzyme catalyses N(6)-(1-hydroxy-2-oxoethyl)-L-lysyl-[protein] + H2O = glycolate + L-lysyl-[protein] + H(+). It carries out the reaction S-(1-hydroxy-2-oxoethyl)-L-cysteinyl-[protein] + H2O = glycolate + L-cysteinyl-[protein] + H(+). The catalysed reaction is N(2)-(1-hydroxy-2-oxopropyl)-dGTP + H2O = lactate + dGTP + H(+). It catalyses the reaction N(2)-(1-hydroxy-2-oxopropyl)-GTP + H2O = lactate + GTP + H(+). The enzyme catalyses N(2)-(1-hydroxy-2-oxopropyl)-GDP + H2O = lactate + GDP + H(+). It carries out the reaction N(2)-(1-hydroxy-2-oxopropyl)-GMP + H2O = lactate + GMP + H(+). The catalysed reaction is N(2)-(1-hydroxy-2-oxoethyl)-dGTP + H2O = dGTP + glycolate + H(+). It catalyses the reaction N(2)-(1-hydroxy-2-oxoethyl)-GTP + H2O = glycolate + GTP + H(+). The enzyme catalyses N(2)-(1-hydroxy-2-oxoethyl)-GDP + H2O = glycolate + GDP + H(+). It carries out the reaction N(2)-(1-hydroxy-2-oxoethyl)-GMP + H2O = glycolate + GMP + H(+). The catalysed reaction is an N(2)-(1-hydroxy-2-oxopropyl)-guanosine in RNA + H2O = a guanosine in RNA + lactate + H(+). It catalyses the reaction an N(2)-(1-hydroxy-2-oxopropyl)-2'-deoxyguanosine in DNA + H2O = a 2'-deoxyguanosine in DNA + lactate + H(+). The enzyme catalyses an N(2)-(1-hydroxy-2-oxoethyl)-guanosine in RNA + H2O = a guanosine in RNA + glycolate + H(+). It carries out the reaction an N(2)-(1-hydroxy-2-oxoethyl)-2'-deoxyguanosine in DNA + H2O = a 2'-deoxyguanosine in DNA + glycolate + H(+). Functionally, protein and nucleotide deglycase that catalyzes the deglycation of the Maillard adducts formed between amino groups of proteins or nucleotides and reactive carbonyl groups of glyoxals. Thus, functions as a protein deglycase that repairs methylglyoxal- and glyoxal-glycated proteins, and releases repaired proteins and lactate or glycolate, respectively. Deglycates cysteine, arginine and lysine residues in proteins, and thus reactivates these proteins by reversing glycation by glyoxals. Acts on early glycation intermediates (hemithioacetals and aminocarbinols), preventing the formation of Schiff bases and advanced glycation endproducts (AGE). Also functions as a nucleotide deglycase able to repair glycated guanine in the free nucleotide pool (GTP, GDP, GMP, dGTP) and in DNA and RNA. Is thus involved in a major nucleotide repair system named guanine glycation repair (GG repair), dedicated to reversing methylglyoxal and glyoxal damage via nucleotide sanitization and direct nucleic acid repair. Plays an important role in protecting cells from carbonyl stress. This chain is Protein/nucleic acid deglycase HchA, found in Escherichia coli O81 (strain ED1a).